The chain runs to 474 residues: MAFGKSHRDPYATSVGHLIEKATFAGVLTEDWGQFLHICDIINTTQDGPKDAVKALKKRISKNYNHKEIQLSLSLIDMCVQNCGPSFQSLIVKKEFIKDTLVKLLNPRYTLPLETQNRILNFIKTWSQGFPGGVDVSEVKEVYLDLLKKGVQFPPSDGEPETRQEAGQISPNRPTSVPTAPALSSIIAPKNPTISLVPEQIGKLHSELDMVKMNVKVMTAILMENTPGSENHEDIELLRKLYKTGREMQERIMDLLVVVENEDVTMELIQVNEDLNNAVLGYERFTRNQQRLLEQKRNRTEATRTSSEPSAPSCDLLDLSPIVPVPTPNEGALNSVNAQLSGLSVSSLSPVITNNLYPSLQPQRDLLASEDIEIPTLFPQRTSQNLASSHTYDNFHSNSVLLQPVSLHTATAAAAANQRLPPLPSSHPVLKDGDLQPPNYYEVMEFDPLAPTTEAVYEEIDGYHQKEAQSHSDC.

Residues 22-154 (ATFAGVLTED…DLLKKGVQFP (133 aa)) form the VHS domain. Positions 153 to 180 (FPPSDGEPETRQEAGQISPNRPTSVPTA) are disordered. A compositionally biased stretch (polar residues) spans 165 to 178 (EAGQISPNRPTSVP). Phosphoserine is present on S170. The GAT domain occupies 199–287 (EQIGKLHSEL…AVLGYERFTR (89 aa)). The segment at 291–317 (RLLEQKRNRTEATRTSSEPSAPSCDLL) is disordered. The segment covering 293-302 (LEQKRNRTEA) has biased composition (basic and acidic residues). Residues S313 and S320 each carry the phosphoserine modification. The interval 392-395 (YDNF) is interaction with GRB2. The short motif at 420 to 424 (LPPLP) is the SH3-binding element. The interaction with PIK3R1 stretch occupies residues 441 to 444 (YEVM). Phosphotyrosine is present on Y457. The SH2-binding motif lies at 457–460 (YEEI).

It belongs to the TOM1 family. In terms of assembly, interacts with LYN. Interacts with the SH2 and SH3 domains of FYN when phosphorylated. Also interacts with GRB2 and PIK3R1 when phosphorylated. Phosphorylated on tyrosines by LYN. Phosphorylated on tyrosines by FYN. As to expression, strongly expressed in brain and kidney, expressed at intermediate levels skin and heart, and weakly expressed in thymus. Not expressed in liver and spleen.

It localises to the golgi apparatus. Its subcellular location is the golgi stack. It is found in the endosome membrane. The protein localises to the cytoplasm. The protein resides in the membrane. In terms of biological role, probable adapter protein involved in signaling pathways. Interacts with the SH2 and SH3 domains of various signaling proteins when it is phosphorylated. May promote FYN activation, possibly by disrupting intramolecular SH3-dependent interactions. The chain is TOM1-like protein 1 (Tom1l1) from Mus musculus (Mouse).